A 313-amino-acid chain; its full sequence is MIEKYKNILITFIALAAIVFLVGCSNKKTDQVTDKKINVVVTNSILADITKNIADDKINLHSIVPVGKDPHEYEPLPVDVQKTSKADLIFYNGLNLETGGNAWFTKLVNNANKKENIDYFPVSTGVEVIYLEGKNTEGKEDPHAWLNLENGIIYAKNIEQQLSKKDPVNKDFYKHNLDKYVKKLSDLDQQAKSKFSLIPENEKMIVTSEGCFKYFSKAYNIPSAYIWEINTEEEGTPDQIKNLVRKLRATELKSLFVESSVDNRPMKTVSKDTGIPIYSTIFTDSVAKKGENGDSYYSMMKWNLDQIYKGLAK.

An N-terminal signal peptide occupies residues methionine 1–glycine 23. Cysteine 24 carries N-palmitoyl cysteine lipidation. The S-diacylglycerol cysteine moiety is linked to residue cysteine 24. Zn(2+)-binding residues include histidine 71, histidine 143, glutamate 209, and aspartate 284.

Belongs to the bacterial solute-binding protein 9 family. Lipoprotein receptor antigen (Lrai) subfamily.

The protein resides in the cell membrane. Part of an ATP-driven transport system for a metal; probably for manganese. This is Metal ABC transporter substrate-binding lipoprotein (mtsA) from Lactococcus lactis subsp. lactis (strain IL1403) (Streptococcus lactis).